A 378-amino-acid chain; its full sequence is Ribosomal RNA large subunit methyltransferase G (378 aa).

Belongs to the methyltransferase superfamily. RlmG family.

It is found in the cytoplasm. The catalysed reaction is guanosine(1835) in 23S rRNA + S-adenosyl-L-methionine = N(2)-methylguanosine(1835) in 23S rRNA + S-adenosyl-L-homocysteine + H(+). Its function is as follows. Specifically methylates the guanine in position 1835 (m2G1835) of 23S rRNA. In Salmonella paratyphi A (strain ATCC 9150 / SARB42), this protein is Ribosomal RNA large subunit methyltransferase G.